A 465-amino-acid chain; its full sequence is ATP synthase subunit beta (465 aa).

An ATP-binding site is contributed by 149 to 156 (GGAGVGKT).

It belongs to the ATPase alpha/beta chains family. F-type ATPases have 2 components, CF(1) - the catalytic core - and CF(0) - the membrane proton channel. CF(1) has five subunits: alpha(3), beta(3), gamma(1), delta(1), epsilon(1). CF(0) has three main subunits: a(1), b(2) and c(9-12). The alpha and beta chains form an alternating ring which encloses part of the gamma chain. CF(1) is attached to CF(0) by a central stalk formed by the gamma and epsilon chains, while a peripheral stalk is formed by the delta and b chains.

Its subcellular location is the cell inner membrane. The enzyme catalyses ATP + H2O + 4 H(+)(in) = ADP + phosphate + 5 H(+)(out). Its function is as follows. Produces ATP from ADP in the presence of a proton gradient across the membrane. The catalytic sites are hosted primarily by the beta subunits. This is ATP synthase subunit beta from Dictyoglomus turgidum (strain DSM 6724 / Z-1310).